The chain runs to 249 residues: Spindlin-4 (249 aa).

3 tudor-like domain regions span residues 41-90 (VGCR…LELH), 119-168 (VGKA…YTLL), and 201-246 (VGKQ…YGLV). Histone H3K4me3 and H3R8me2a binding stretches follow at residues 80-85 (GKDSVY), Glu-128, and 237-239 (DIH).

It belongs to the SPIN/STSY family. In terms of assembly, interacts with C11orf84/SPINDOC. Associates with chromatin.

It is found in the cytoplasm. It localises to the nucleus. Binds to acetylated and methylated histones, including H3K4me3 and H4K20me3, probably acting as a histone reader that recognizes chromatin marks to mediate downstream cellular effects. Promotes canonical WNT signaling, and is involved in the down-regulation of cell proliferation. In Mus musculus (Mouse), this protein is Spindlin-4 (Spin4).